The chain runs to 1069 residues: Epstein-Barr nuclear antigen 6 (1069 aa).

Disordered regions lie at residues Met-1–Arg-75, Met-353–Ser-708, Ser-733–Gly-776, Arg-884–Leu-932, and Pro-1008–Asp-1069. The span at Pro-50–Arg-67 shows a compositional bias: basic and acidic residues. Acidic residues-rich tracts occupy residues Val-381–Pro-391 and Tyr-507–Thr-524. Polar residues predominate over residues Ser-543–Ser-561. Over residues Gln-689–Ser-708 the composition is skewed to low complexity. Basic and acidic residues predominate over residues Ser-742–Asp-751. The segment covering Ser-1032 to Ile-1048 has biased composition (polar residues).

It belongs to the herpesviridae EBNA-6 family. Interacts with host CTPB1; this interaction leads to gene repression, but also seems to interfere with the repressive function of CtBP pre-bound to DNA, leading to EBNA6 mediated up-regulation of many host genes. Interacts with host MYC; this interaction enhances MYC stability. Interacts (via N-terminus) with host RBPJ. Interacts (via N-terminus) with host histone H2AX; this interaction facilitates H2AX proteasomal degradation. Interacts with host TP73; this interaction inhibits TP73-mediated apoptotic pathway. Interacts (via N-terminus) with host PIM1; this interaction upregulates and stabilizes PIM1 and induces cell proliferation by inhibiting the growth suppressive properties of p21.

The protein resides in the host nucleus. Its subcellular location is the host nucleus matrix. Its function is as follows. Plays an essential role for the activation and immortalization of human B-cells. Represses transcription of viral promoters TP1 and Cp through interaction with host RBPJ, and inhibits EBNA2-mediated activation of these promoters. Targets host chromatin through interactions with host transcription factors, especially RBPJ and IRF4. Alternatively, EBNA6 also regulates the transcription of the EBV oncogene LMP1 in a cell cycle-dependent manner. Modulates the activity of several host proteins involved in cell cycle regulation including host cyclin A, MYC, RB, p21 and p27 mainly through binding to the host SCF(SKP2) complex. Inhibits the promoter of host H2AX and targets H2AX to proteasomal degradation in order to promote latency and cell proliferation. Upregulates host PIM1 expression and stabilization. Potentiates PIM1 to promote cell proliferation by inhibiting the growth suppressive properties of p21. This chain is Epstein-Barr nuclear antigen 6 (EBNA6), found in Epstein-Barr virus (strain AG876) (HHV-4).